The following is a 700-amino-acid chain: Auxin response factor 18 (700 aa).

Positions 128-230 form a DNA-binding region, TF-B3; the sequence is FAKTLTQSDA…DLCVGIRRAK (103 aa). Disordered stretches follow at residues 234–254 and 560–595; these read VGGP…AAGG and VKKS…DNLS. The segment covering 239-250 has biased composition (pro residues); sequence FLPPPPPPPPTP. Polar residues predominate over residues 565 to 594; that stretch reads SDGNAENTVNKSNSDVSSPRSNQNGTTDNL. The PB1 domain occupies 614–697; sequence TGHCKVFMQS…NILTDTSGDN (84 aa).

It belongs to the ARF family. In terms of assembly, homodimers and heterodimers. Expressed in roots, culms, leaves and young panicles.

It localises to the nucleus. Functionally, auxin response factors (ARFs) are transcriptional factors that bind specifically to the DNA sequence 5'-TGTCTC-3' found in the auxin-responsive promoter elements (AuxREs). The chain is Auxin response factor 18 (ARF18) from Oryza sativa subsp. japonica (Rice).